The primary structure comprises 695 residues: FMR1-interacting protein NUFIP2 (695 aa).

A disordered region spans residues 1–100 (MEEKPGQPQP…KTGYGELNGN (100 aa)). Basic residues-rich tracts occupy residues 11–23 (QHHHSHHHPHHHP) and 30–53 (PHHHHHYYFYNHSHNHHHHHHHQQ). Lys-78 is covalently cross-linked (Glycyl lysine isopeptide (Lys-Gly) (interchain with G-Cter in SUMO2)). Thr-87 bears the Phosphothreonine mark. Lys-109 participates in a covalent cross-link: Glycyl lysine isopeptide (Lys-Gly) (interchain with G-Cter in SUMO2). Ser-112 and Ser-113 each carry phosphoserine. Residues Lys-136, Lys-146, Lys-157, and Lys-171 each participate in a glycyl lysine isopeptide (Lys-Gly) (interchain with G-Cter in SUMO2) cross-link. Disordered stretches follow at residues 155–189 (IQKNSMDKKNGKSYENKSGENQSVDKSDTIPIPNG), 204–234 (GKGADNDGSGSESGYTTPKKRKARRNSAKGC), 261–341 (FKPD…KPPP), and 369–402 (TIQNSSVSPTSSSSSSSSTGETQTQSSSRLSQVP). Positions 159–182 (SMDKKNGKSYENKSGENQSVDKSD) are enriched in basic and acidic residues. Residues Ser-212 and Ser-214 each carry the phosphoserine modification. The residue at position 218 (Tyr-218) is a Phosphotyrosine. Phosphothreonine occurs at positions 219 and 220. Basic residues predominate over residues 221-230 (PKKRKARRNS). The span at 261–275 (FKPDYSEQKGNRVDG) shows a compositional bias: basic and acidic residues. Glycyl lysine isopeptide (Lys-Gly) (interchain with G-Cter in SUMO2) cross-links involve residues Lys-262 and Lys-281. Arg-291 is modified (omega-N-methylarginine). Residue Lys-293 forms a Glycyl lysine isopeptide (Lys-Gly) (interchain with G-Cter in SUMO2) linkage. The residue at position 304 (Ser-304) is a Phosphoserine. Residue Lys-307 forms a Glycyl lysine isopeptide (Lys-Gly) (interchain with G-Cter in SUMO2) linkage. The segment covering 373–396 (SSVSPTSSSSSSSSTGETQTQSSS) has biased composition (low complexity). Ser-376 carries the post-translational modification Phosphoserine. Thr-571 carries the post-translational modification Phosphothreonine. Phosphoserine is present on residues Ser-572, Ser-592, Ser-608, and Ser-629. Position 633 is a phosphothreonine (Thr-633). A phosphoserine mark is found at Ser-637, Ser-652, Ser-655, and Ser-692.

Interacts with FMR1 (via N-terminus). Interacts with DDX6.

Its subcellular location is the nucleus. It is found in the cytoplasm. The protein resides in the stress granule. Binds RNA. This chain is FMR1-interacting protein NUFIP2, found in Homo sapiens (Human).